The primary structure comprises 253 residues: 2-C-methyl-D-erythritol 4-phosphate cytidylyltransferase (253 aa).

It belongs to the IspD/TarI cytidylyltransferase family. IspD subfamily.

It catalyses the reaction 2-C-methyl-D-erythritol 4-phosphate + CTP + H(+) = 4-CDP-2-C-methyl-D-erythritol + diphosphate. Its pathway is isoprenoid biosynthesis; isopentenyl diphosphate biosynthesis via DXP pathway; isopentenyl diphosphate from 1-deoxy-D-xylulose 5-phosphate: step 2/6. Catalyzes the formation of 4-diphosphocytidyl-2-C-methyl-D-erythritol from CTP and 2-C-methyl-D-erythritol 4-phosphate (MEP). The protein is 2-C-methyl-D-erythritol 4-phosphate cytidylyltransferase of Chlorobium chlorochromatii (strain CaD3).